We begin with the raw amino-acid sequence, 228 residues long: Uracil-DNA glycosylase (228 aa).

The Proton acceptor role is filled by Asp-71.

It belongs to the uracil-DNA glycosylase (UDG) superfamily. UNG family.

It localises to the cytoplasm. The catalysed reaction is Hydrolyzes single-stranded DNA or mismatched double-stranded DNA and polynucleotides, releasing free uracil.. In terms of biological role, excises uracil residues from the DNA which can arise as a result of misincorporation of dUMP residues by DNA polymerase or due to deamination of cytosine. The sequence is that of Uracil-DNA glycosylase from Thermobifida fusca (strain YX).